The sequence spans 54 residues: U1-ctenitoxin-Pr1a (54 aa).

Cystine bridges form between C2–C19, C9–C25, C16–C51, C18–C39, and C27–C37.

As to expression, expressed by the venom gland.

The protein localises to the secreted. Omega-agatoxins are antagonists of voltage-gated calcium channels (Cav). Causes rapid general flaccid paralysis followed by death in 10-30 minutes when injected in mice at dose levels of 5 ug per mouse. The polypeptide is U1-ctenitoxin-Pr1a (Phoneutria reidyi (Brazilian Amazonian armed spider)).